The chain runs to 360 residues: S-adenosylmethionine:tRNA ribosyltransferase-isomerase (360 aa).

It belongs to the QueA family. Monomer.

Its subcellular location is the cytoplasm. The enzyme catalyses 7-aminomethyl-7-carbaguanosine(34) in tRNA + S-adenosyl-L-methionine = epoxyqueuosine(34) in tRNA + adenine + L-methionine + 2 H(+). It participates in tRNA modification; tRNA-queuosine biosynthesis. Functionally, transfers and isomerizes the ribose moiety from AdoMet to the 7-aminomethyl group of 7-deazaguanine (preQ1-tRNA) to give epoxyqueuosine (oQ-tRNA). This Rhodopseudomonas palustris (strain TIE-1) protein is S-adenosylmethionine:tRNA ribosyltransferase-isomerase.